The chain runs to 124 residues: MIIKEAKDAKRGRVHSRIRKKMEGTPERPRLNVYRSTNHLYVQVIDDSKGATLVAANTLEFGEAKEGKRPTGGNLSAAKQLGKAIAERAKQKGINKVVFDRGGYLYHGRIKALADAAREGGLEF.

Belongs to the universal ribosomal protein uL18 family. In terms of assembly, part of the 50S ribosomal subunit; part of the 5S rRNA/L5/L18/L25 subcomplex. Contacts the 5S and 23S rRNAs.

Its function is as follows. This is one of the proteins that bind and probably mediate the attachment of the 5S RNA into the large ribosomal subunit, where it forms part of the central protuberance. The protein is Large ribosomal subunit protein uL18 of Koribacter versatilis (strain Ellin345).